Here is a 507-residue protein sequence, read N- to C-terminus: Histidine ammonia-lyase (507 aa).

The 5-imidazolinone (Ala-Gly) cross-link spans 141–143 (ASG). S142 bears the 2,3-didehydroalanine (Ser) mark.

Belongs to the PAL/histidase family. Contains an active site 4-methylidene-imidazol-5-one (MIO), which is formed autocatalytically by cyclization and dehydration of residues Ala-Ser-Gly.

The protein resides in the cytoplasm. The catalysed reaction is L-histidine = trans-urocanate + NH4(+). It functions in the pathway amino-acid degradation; L-histidine degradation into L-glutamate; N-formimidoyl-L-glutamate from L-histidine: step 1/3. This is Histidine ammonia-lyase from Cereibacter sphaeroides (strain KD131 / KCTC 12085) (Rhodobacter sphaeroides).